The chain runs to 249 residues: Phosphate import ATP-binding protein PstB (249 aa).

The ABC transporter domain occupies 4 to 244; sequence IQTKDLNLYY…PKDKRTEDYI (241 aa). 36–43 contributes to the ATP binding site; that stretch reads GPSGCGKS.

It belongs to the ABC transporter superfamily. Phosphate importer (TC 3.A.1.7) family. The complex is composed of two ATP-binding proteins (PstB), two transmembrane proteins (PstC and PstA) and a solute-binding protein (PstS).

The protein localises to the cell membrane. It catalyses the reaction phosphate(out) + ATP + H2O = ADP + 2 phosphate(in) + H(+). Its function is as follows. Part of the ABC transporter complex PstSACB involved in phosphate import. Responsible for energy coupling to the transport system. This Clostridium acetobutylicum (strain ATCC 824 / DSM 792 / JCM 1419 / IAM 19013 / LMG 5710 / NBRC 13948 / NRRL B-527 / VKM B-1787 / 2291 / W) protein is Phosphate import ATP-binding protein PstB.